A 610-amino-acid polypeptide reads, in one-letter code: DEAD-box ATP-dependent RNA helicase 9, mitochondrial (610 aa).

Residues 1–66 (MISTVLRRSI…SSPFGVKVRD (66 aa)) constitute a mitochondrion transit peptide. The Q motif motif lies at 116-144 (LAIADLGISPEIVKALKGRGIEKLFPIQK). Residues 147–321 (LEPAMEGRDM…KKYLNNPLTI (175 aa)) enclose the Helicase ATP-binding domain. 160–167 (ARTGTGKT) provides a ligand contact to ATP. Positions 269–272 (DEAD) match the DEAD box motif. The Helicase C-terminal domain occupies 350–494 (IIGPLVKEHG…ELPSIAVERG (145 aa)). Residues 542–557 (SGRSGGGGGSYGGSGG) show a composition bias toward gly residues. Residues 542–610 (SGRSGGGGGS…FGSNDGKRSY (69 aa)) are disordered. Residues 558 to 572 (SSSRYSGGSDRSSGF) are compositionally biased toward low complexity. Positions 573–585 (GSFGSGGSSGGFG) are enriched in gly residues. Residues 586–596 (SDRSSQSSGRS) are compositionally biased toward low complexity.

The protein belongs to the DEAD box helicase family. DDX21/DDX50 subfamily.

It localises to the mitochondrion. The enzyme catalyses ATP + H2O = ADP + phosphate + H(+). This chain is DEAD-box ATP-dependent RNA helicase 9, mitochondrial (RH9), found in Arabidopsis thaliana (Mouse-ear cress).